Reading from the N-terminus, the 380-residue chain is MSEGGSDVSSLSCSLSLDSDSCEDEFYETNLNKLIENTSLNWIFVGGKGGVGKTTTSCSIAIQLAKKRESVLLLSTDPAHNTSDAFNQKFTNKPTLINSFDNLYCMEIDTTFSEDTAFKINQSNFLNSIIPELLQSFPGIDEALCFAELMQSIKNMKYSVIVFDTAPTGHTLRLLAFPDLLKKALGYLINLKEKLKGTLNMLQSLTNNEMEFEGMYDKINHLNTMSISIQENFQNPLKTTFVCVCIPEFLSVYETERLIQELTKKNISCYNIVVNQVVFPLICPDANIEKCENLLKQIKDTNIQDSFNTLILKAKELEDVYISRRKLQSKYLTQIKNLYGNYFHIVCMPQLKTEIRGLDKISNFSEMLLQSKDIPIYSPQ.

48-55 (KGGVGKTT) contributes to the ATP binding site. The active site involves Asp-77. ATP contacts are provided by Glu-248 and Asn-275.

This sequence belongs to the arsA ATPase family. In terms of assembly, homodimer.

The protein localises to the cytoplasm. Its subcellular location is the endoplasmic reticulum. Functionally, ATPase required for the post-translational delivery of tail-anchored (TA) proteins to the endoplasmic reticulum. Recognizes and selectively binds the transmembrane domain of TA proteins in the cytosol. This complex then targets to the endoplasmic reticulum by membrane-bound receptors, where the tail-anchored protein is released for insertion. This process is regulated by ATP binding and hydrolysis. ATP binding drives the homodimer towards the closed dimer state, facilitating recognition of newly synthesized TA membrane proteins. ATP hydrolysis is required for insertion. Subsequently, the homodimer reverts towards the open dimer state, lowering its affinity for the membrane-bound receptor, and returning it to the cytosol to initiate a new round of targeting. The chain is ATPase ASNA1 homolog from Plasmodium yoelii yoelii.